A 78-amino-acid chain; its full sequence is Consomatin Te1 (78 aa).

Residues 1–22 (MQTAYWMMVMMMVWITAPLSEG) form the signal peptide. The propeptide occupies 23–56 (GQLNDVIRGLVPDNLAPQLVLQSLDSRRHPHGIR). Cysteines 63 and 68 form a disulfide. Tryptophan 65 bears the D-tryptophan mark. Proline 69, proline 70, and proline 72 each carry 4-hydroxyproline. A propeptide spanning residues 74–78 (RRLGS) is cleaved from the precursor.

The protein belongs to the conotoxin C superfamily. Consomatin family. As to expression, expressed by the venom duct.

The protein localises to the secreted. In terms of biological role, moderately activates human somatostatin receptors (SSTR) with a preferential activation of SSTR1 and SSTR4. In vivo, does not cause behavioral changes in mice within a few minutes of intracranial injection, but causes a progressive loss of movement thereafter. Four to five hours after injection, mice recover, even with the highest dose tested. Shows antinociception and antihyperalgesia activities in two mouse models of acute pain, most probably by acting outside the central nervous system. The chain is Consomatin Te1 from Conus terebra (Sea snail).